We begin with the raw amino-acid sequence, 656 residues long: Very long-chain specific acyl-CoA dehydrogenase, mitochondrial (656 aa).

Residues 1-33 (MQSARMTPSVGRQLLRLGARSSRSTTVLQGQPR) are disordered. Residues 1-41 (MQSARMTPSVGRQLLRLGARSSRSTTVLQGQPRPISAQRLY) constitute a mitochondrion transit peptide. The catalytic stretch occupies residues 42–483 (AREATQAVLD…ALQGCMDKGK (442 aa)). K52 is modified (N6-acetyllysine). Residues K72 and K128 each carry the N6-acetyllysine; alternate modification. K72 and K128 each carry N6-succinyllysine; alternate. The residue at position 196 (K196) is an N6-succinyllysine. 215 to 224 (FCLTEPSSGS) provides a ligand contact to FAD. Position 238 is an S-nitrosocysteine (C238). K240 bears the N6-acetyllysine; alternate mark. K240 is modified (N6-succinyllysine; alternate). Residue 250–252 (WIS) participates in FAD binding. Residue K269 is modified to N6-succinyllysine. An N6-acetyllysine; alternate mark is found at K277 and K279. N6-succinyllysine; alternate is present on residues K277 and K279. An N6-acetyllysine mark is found at K299 and K317. K332 bears the N6-acetyllysine; alternate mark. At K332 the chain carries N6-succinyllysine; alternate. The residue at position 373 (K373) is an N6-succinyllysine. 462 to 464 (FEG) is a substrate binding site. The active-site Proton acceptor is E463. Residue 465–467 (AND) coordinates FAD. K483 carries the post-translational modification N6-acetyllysine; alternate. K483 bears the N6-succinyllysine; alternate mark. Residues 484–517 (ELTGLGNALKNPFGNVGLLMGEAGKQLRRRTGIG) are membrane-anchoring. Phosphoserine is present on residues S518 and S523. At K551 the chain carries N6-acetyllysine. An N6-acetyllysine; alternate modification is found at K557. K557 bears the N6-succinyllysine; alternate mark. Q563 contacts FAD. The residue at position 640 (K640) is an N6-succinyllysine.

The protein belongs to the acyl-CoA dehydrogenase family. As to quaternary structure, homodimer. Homodimerizes after import into the mitochondrion. FAD is required as a cofactor. In terms of processing, S-nitrosylation at Cys-238 in liver improves catalytic efficiency.

The protein localises to the mitochondrion inner membrane. It carries out the reaction a very-long-chain 2,3-saturated fatty acyl-CoA + oxidized [electron-transfer flavoprotein] + H(+) = a very-long-chain (2E)-enoyl-CoA + reduced [electron-transfer flavoprotein]. The enzyme catalyses dodecanoyl-CoA + oxidized [electron-transfer flavoprotein] + H(+) = (2E)-dodecenoyl-CoA + reduced [electron-transfer flavoprotein]. It catalyses the reaction tetradecanoyl-CoA + oxidized [electron-transfer flavoprotein] + H(+) = (2E)-tetradecenoyl-CoA + reduced [electron-transfer flavoprotein]. The catalysed reaction is oxidized [electron-transfer flavoprotein] + hexadecanoyl-CoA + H(+) = (2E)-hexadecenoyl-CoA + reduced [electron-transfer flavoprotein]. It carries out the reaction octadecanoyl-CoA + oxidized [electron-transfer flavoprotein] + H(+) = (2E)-octadecenoyl-CoA + reduced [electron-transfer flavoprotein]. The enzyme catalyses eicosanoyl-CoA + oxidized [electron-transfer flavoprotein] + H(+) = (2E)-eicosenoyl-CoA + reduced [electron-transfer flavoprotein]. It catalyses the reaction docosanoyl-CoA + oxidized [electron-transfer flavoprotein] + H(+) = (2E)-docosenoyl-CoA + reduced [electron-transfer flavoprotein]. The catalysed reaction is tetracosanoyl-CoA + oxidized [electron-transfer flavoprotein] + H(+) = (2E)-tetracosenoyl-CoA + reduced [electron-transfer flavoprotein]. The protein operates within lipid metabolism; mitochondrial fatty acid beta-oxidation. Functionally, very long-chain specific acyl-CoA dehydrogenase is one of the acyl-CoA dehydrogenases that catalyze the first step of mitochondrial fatty acid beta-oxidation, an aerobic process breaking down fatty acids into acetyl-CoA and allowing the production of energy from fats. The first step of fatty acid beta-oxidation consists in the removal of one hydrogen from C-2 and C-3 of the straight-chain fatty acyl-CoA thioester, resulting in the formation of trans-2-enoyl-CoA. Among the different mitochondrial acyl-CoA dehydrogenases, very long-chain specific acyl-CoA dehydrogenase acts specifically on acyl-CoAs with saturated 12 to 24 carbons long primary chains. This is Very long-chain specific acyl-CoA dehydrogenase, mitochondrial from Mus musculus (Mouse).